We begin with the raw amino-acid sequence, 555 residues long: Potassium-transporting ATPase potassium-binding subunit (555 aa).

10 consecutive transmembrane segments (helical) span residues 2–22, 60–80, 130–150, 173–193, 246–266, 278–298, 374–394, 412–432, 483–503, and 525–545; these read IWVA…PTGI, QYAL…YFIF, IGIT…VMAF, VFLP…VPQT, MSNI…PFTY, ILFV…TTSE, AGFV…GLMV, LIAV…ALAL, LVMF…AASL, and GIFI…MLVL.

It belongs to the KdpA family. In terms of assembly, the system is composed of three essential subunits: KdpA, KdpB and KdpC.

Its subcellular location is the cell membrane. Its function is as follows. Part of the high-affinity ATP-driven potassium transport (or Kdp) system, which catalyzes the hydrolysis of ATP coupled with the electrogenic transport of potassium into the cytoplasm. This subunit binds the extracellular potassium ions and delivers the ions to the membrane domain of KdpB through an intramembrane tunnel. This chain is Potassium-transporting ATPase potassium-binding subunit, found in Bacillus anthracis (strain A0248).